The primary structure comprises 466 residues: 3-isopropylmalate dehydratase large subunit (466 aa).

The [4Fe-4S] cluster site is built by Cys-347, Cys-407, and Cys-410.

The protein belongs to the aconitase/IPM isomerase family. LeuC type 1 subfamily. Heterodimer of LeuC and LeuD. Requires [4Fe-4S] cluster as cofactor.

The catalysed reaction is (2R,3S)-3-isopropylmalate = (2S)-2-isopropylmalate. It functions in the pathway amino-acid biosynthesis; L-leucine biosynthesis; L-leucine from 3-methyl-2-oxobutanoate: step 2/4. Its function is as follows. Catalyzes the isomerization between 2-isopropylmalate and 3-isopropylmalate, via the formation of 2-isopropylmaleate. This Solibacter usitatus (strain Ellin6076) protein is 3-isopropylmalate dehydratase large subunit.